The primary structure comprises 203 residues: Membrane-spanning 4-domains subfamily A member 13 (203 aa).

Transmembrane regions (helical) follow at residues 15–35 (VLGVIQIMIGIYHVLMWYFLL), 56–76 (MGTSLWGFAFVISGAFTVKAA), 84–104 (ILCTMSLNILCIIITIVAASL), and 141–161 (FAIALLYSISSCAYLPLSSIV).

Belongs to the MS4A family.

The protein resides in the membrane. Its function is as follows. May be involved in signal transduction as a component of a multimeric receptor complex. The sequence is that of Membrane-spanning 4-domains subfamily A member 13 (Ms4a13) from Mus musculus (Mouse).